The following is a 442-amino-acid chain: Ribosomal protein uS12 methylthiotransferase RimO (442 aa).

One can recognise an MTTase N-terminal domain in the interval 8-118 (PKVGFVSLGC…VLGHVHKYVE (111 aa)). Cysteine 17, cysteine 53, cysteine 82, cysteine 150, cysteine 154, and cysteine 157 together coordinate [4Fe-4S] cluster. One can recognise a Radical SAM core domain in the interval 136-373 (LTPRHYAYLK…MELQQQVSIR (238 aa)). The TRAM domain maps to 376-442 (ARKVGKEMLV…EYDLWASLID (67 aa)).

The protein belongs to the methylthiotransferase family. RimO subfamily. The cofactor is [4Fe-4S] cluster.

The protein localises to the cytoplasm. The enzyme catalyses L-aspartate(89)-[ribosomal protein uS12]-hydrogen + (sulfur carrier)-SH + AH2 + 2 S-adenosyl-L-methionine = 3-methylsulfanyl-L-aspartate(89)-[ribosomal protein uS12]-hydrogen + (sulfur carrier)-H + 5'-deoxyadenosine + L-methionine + A + S-adenosyl-L-homocysteine + 2 H(+). Catalyzes the methylthiolation of an aspartic acid residue of ribosomal protein uS12. This Aeromonas hydrophila subsp. hydrophila (strain ATCC 7966 / DSM 30187 / BCRC 13018 / CCUG 14551 / JCM 1027 / KCTC 2358 / NCIMB 9240 / NCTC 8049) protein is Ribosomal protein uS12 methylthiotransferase RimO.